A 223-amino-acid chain; its full sequence is Ubiquitin carboxyl-terminal hydrolase isozyme L1 (223 aa).

An N-acetylmethionine modification is found at methionine 1. The UCH catalytic domain maps to 2–221; that stretch reads QLKPMEINPE…VRFSAVALCK (220 aa). Residues 5-10 are interaction with ubiquitin; that stretch reads PMEINP. Catalysis depends on cysteine 90, which acts as the Nucleophile. Serine 125 carries the post-translational modification Phosphoserine. The active-site Proton donor is the histidine 161. The interval 211–216 is interaction with ubiquitin; the sequence is EVRFSA. Cysteine 220 carries S-farnesyl cysteine lipidation. A propeptide spans 221–223 (removed in mature form); that stretch reads KAA.

This sequence belongs to the peptidase C12 family. As to quaternary structure, monomer. Homodimer. Interacts with SNCA. Interacts with COPS5. In terms of processing, O-glycosylated. In terms of tissue distribution, found in neuronal cell bodies and processes throughout the neocortex (at protein level). Expressed in neurons and cells of the diffuse neuroendocrine system and their tumors. Weakly expressed in ovary. Down-regulated in brains from Parkinson disease and Alzheimer disease patients.

The protein resides in the cytoplasm. The protein localises to the endoplasmic reticulum membrane. The enzyme catalyses Thiol-dependent hydrolysis of ester, thioester, amide, peptide and isopeptide bonds formed by the C-terminal Gly of ubiquitin (a 76-residue protein attached to proteins as an intracellular targeting signal).. In terms of biological role, deubiquitinase that plays a role in the regulation of several processes such as maintenance of synaptic function, cardiac function, inflammatory response or osteoclastogenesis. Abrogates the ubiquitination of multiple proteins including WWTR1/TAZ, EGFR, HIF1A and beta-site amyloid precursor protein cleaving enzyme 1/BACE1. In addition, recognizes and hydrolyzes a peptide bond at the C-terminal glycine of ubiquitin to maintain a stable pool of monoubiquitin that is a key requirement for the ubiquitin-proteasome and the autophagy-lysosome pathways. Regulates amyloid precursor protein/APP processing by promoting BACE1 degradation resulting in decreased amyloid beta production. Plays a role in the immune response by regulating the ability of MHC I molecules to reach cross-presentation compartments competent for generating Ag-MHC I complexes. Mediates the 'Lys-48'-linked deubiquitination of the transcriptional coactivator WWTR1/TAZ leading to its stabilization and inhibition of osteoclastogenesis. Deubiquitinates and stabilizes epidermal growth factor receptor EGFR to prevent its degradation and to activate its downstream mediators. Modulates oxidative activity in skeletal muscle by regulating key mitochondrial oxidative proteins. Enhances the activity of hypoxia-inducible factor 1-alpha/HIF1A by abrogateing its VHL E3 ligase-mediated ubiquitination and consequently inhibiting its degradation. The chain is Ubiquitin carboxyl-terminal hydrolase isozyme L1 (UCHL1) from Homo sapiens (Human).